The chain runs to 360 residues: Homeobox protein ceh-60 (360 aa).

Residues 1–82 (MDNLIKQLQM…ENPTFPLEEV (82 aa)) are PBC-A. Residues 1-179 (MDNLIKQLQM…ILVLRREIEQ (179 aa)) form the PBC domain. The tract at residues 85 to 179 (EKDEEWQPLE…ILVLRREIEQ (95 aa)) is PBC-B. Residues 180–242 (QGRKRRNFDK…NQRIRTKQQA (63 aa)) constitute a DNA-binding region (homeobox).

The protein belongs to the TALE/PBX homeobox family. As to quaternary structure, forms a heterodimer with homeobox unc-62. Interacts with pqm-1.

It is found in the nucleus. Probable transcription regulator which binds to DNA, repressing genes involved in longevity and stress, while activating genes involved in reproduction, such as the vitellogenins. Associates with homeobox unc-62 to regulate gene expression, including repression of genes involved in innate immunity. Required for intestinal expression of vitellogenin genes. Negatively modulates longevity, probably independently of effects on vitellogenesis. Involved in lipid homeostasis, contributing to the reallocation of intestinal lipids to the germline and to the formation of the cuticle. Associates with transcriptional regulator pqm-1 at the daf-16 associated element within the promoters of stress-responsive genes to regulate expression. In Caenorhabditis elegans, this protein is Homeobox protein ceh-60.